The following is a 275-amino-acid chain: TATA-box-binding protein (275 aa).

2 disordered regions span residues 23–45 (EDESIQTQQQQQTPRHPASFGMN) and 73–92 (GSMSIYGPGTPAPATPHTPA). Tandem repeats lie at residues 103–179 (LENI…ARIV) and 193–270 (IQNM…YPIL).

Belongs to the TBP family. Belongs to the TFIID complex together with the TBP-associated factors (TAFs). Binds DNA as monomer.

The protein resides in the nucleus. Its function is as follows. General transcription factor that functions at the core of the DNA-binding multiprotein factor TFIID. Binding of TFIID to the TATA box is the initial transcriptional step of the pre-initiation complex (PIC), playing a role in the activation of eukaryotic genes transcribed by RNA polymerase II. The sequence is that of TATA-box-binding protein from Artemia franciscana (Brine shrimp).